A 464-amino-acid chain; its full sequence is F-box/WD repeat-containing protein 12 (464 aa).

The region spanning 1 to 45 (MEIRLPDLALKRIFSFLDLFGLLQVSQVNKHWNRIADSDYLWRSL) is the F-box domain. WD repeat units lie at residues 89-132 (YKVT…CAWD), 136-174 (GTMI…KVWN), 178-217 (RDAL…YTFT), 222-263 (RDVS…FLTE), 270-315 (EGSV…ITFD), 320-367 (KTGG…LLFS), 370-407 (GFLL…YMWE), and 416-461 (RSCC…VMYS).

In terms of assembly, interacts with SKP1. Interacts with CUL1. Interacts with IL22RA1. In terms of tissue distribution, ubiquitously expressed.

It functions in the pathway protein modification; protein ubiquitination. Functionally, substrate-recognition component of the SCF (SKP1-CUL1-F-box protein)-type E3 ubiquitin ligase complex. Promotes degradation of interleukin-22 receptor subunit IL22RA1 in resting and IL22-stimulated conditions by facilitating its ubiquitination. Functions as a cell growth suppressor. The chain is F-box/WD repeat-containing protein 12 (FBXW12) from Homo sapiens (Human).